We begin with the raw amino-acid sequence, 56 residues long: UPF0434 protein CbuK_1382 (56 aa).

Belongs to the UPF0434 family.

This Coxiella burnetii (strain CbuK_Q154) (Coxiella burnetii (strain Q154)) protein is UPF0434 protein CbuK_1382.